Consider the following 164-residue polypeptide: UPF0304 protein YfbU (164 aa).

The protein belongs to the UPF0304 family.

This chain is UPF0304 protein YfbU, found in Escherichia coli O127:H6 (strain E2348/69 / EPEC).